The following is a 148-amino-acid chain: Deoxyuridine 5'-triphosphate nucleotidohydrolase (148 aa).

Substrate-binding positions include 68 to 70 (RSG), asparagine 81, 85 to 87 (TID), and lysine 95.

This sequence belongs to the dUTPase family. Mg(2+) is required as a cofactor.

The catalysed reaction is dUTP + H2O = dUMP + diphosphate + H(+). Its pathway is pyrimidine metabolism; dUMP biosynthesis; dUMP from dCTP (dUTP route): step 2/2. This enzyme is involved in nucleotide metabolism: it produces dUMP, the immediate precursor of thymidine nucleotides and it decreases the intracellular concentration of dUTP so that uracil cannot be incorporated into DNA. The sequence is that of Deoxyuridine 5'-triphosphate nucleotidohydrolase from Rickettsia peacockii (strain Rustic).